A 173-amino-acid polypeptide reads, in one-letter code: RNA pyrophosphohydrolase (173 aa).

The Nudix hydrolase domain maps to 11-164 (PYRRSVGILV…KKHVYMKIVN (154 aa)). The short motif at 52-73 (GGIDENEEPLDAARRELYEETG) is the Nudix box element.

The protein belongs to the Nudix hydrolase family. RppH subfamily. A divalent metal cation serves as cofactor.

Accelerates the degradation of transcripts by removing pyrophosphate from the 5'-end of triphosphorylated RNA, leading to a more labile monophosphorylated state that can stimulate subsequent ribonuclease cleavage. In Bartonella henselae (strain ATCC 49882 / DSM 28221 / CCUG 30454 / Houston 1) (Rochalimaea henselae), this protein is RNA pyrophosphohydrolase.